Consider the following 710-residue polypeptide: Prolyl endopeptidase (710 aa).

Met1 is modified (N-acetylmethionine). At Lys157 the chain carries N6-acetyllysine. Active-site charge relay system residues include Ser554, Asp641, and His680.

The protein belongs to the peptidase S9A family. As to expression, expressed in all tissues tested: uterus, kidney, heart, lung, small intestine, smooth muscle, liver, spleen, thymus, adrenal, pituitary and whole brain.

The protein resides in the cytoplasm. The enzyme catalyses Hydrolysis of Pro-|-Xaa &gt;&gt; Ala-|-Xaa in oligopeptides.. Its activity is regulated as follows. Inhibited by DFP, Z-Pro-prolinal and poststatin, but not by PMSF, SBTI, EDTA, leupeptin, E-64 and pepstatin. Cleaves peptide bonds on the C-terminal side of prolyl residues within peptides that are up to approximately 30 amino acids long. Has high activity on the succinyl- (suc-) peptide-4-methylcoumaryl-7-amide (MCA) substrates suc-Gly-Pro-Leu-Gly-Pro-MCA, suc-Gly-Pro-MCA and suc-Ala-Ala-Ala-MCA. The chain is Prolyl endopeptidase from Rattus norvegicus (Rat).